Consider the following 370-residue polypeptide: Putative agmatine deiminase (370 aa).

The Amidino-cysteine intermediate role is filled by C361.

The protein belongs to the agmatine deiminase family.

It catalyses the reaction agmatine + H2O = N-carbamoylputrescine + NH4(+). The sequence is that of Putative agmatine deiminase from Shewanella putrefaciens (strain CN-32 / ATCC BAA-453).